The sequence spans 202 residues: Holliday junction branch migration complex subunit RuvA (202 aa).

The segment at 1–64 (MIGRLRGSLA…EDAHLLYGFY (64 aa)) is domain I. The domain II stretch occupies residues 65–143 (EKRERELFRE…AWEALPGTFT (79 aa)). The tract at residues 144 to 153 (LVSNGPNQAE) is flexible linker. The domain III stretch occupies residues 154–202 (PVASAESDAVSALISLGYKPQEASKAVSAIKEKDLSSADLIRRALKGMG).

The protein belongs to the RuvA family. In terms of assembly, homotetramer. Forms an RuvA(8)-RuvB(12)-Holliday junction (HJ) complex. HJ DNA is sandwiched between 2 RuvA tetramers; dsDNA enters through RuvA and exits via RuvB. An RuvB hexamer assembles on each DNA strand where it exits the tetramer. Each RuvB hexamer is contacted by two RuvA subunits (via domain III) on 2 adjacent RuvB subunits; this complex drives branch migration. In the full resolvosome a probable DNA-RuvA(4)-RuvB(12)-RuvC(2) complex forms which resolves the HJ.

It localises to the cytoplasm. Its function is as follows. The RuvA-RuvB-RuvC complex processes Holliday junction (HJ) DNA during genetic recombination and DNA repair, while the RuvA-RuvB complex plays an important role in the rescue of blocked DNA replication forks via replication fork reversal (RFR). RuvA specifically binds to HJ cruciform DNA, conferring on it an open structure. The RuvB hexamer acts as an ATP-dependent pump, pulling dsDNA into and through the RuvAB complex. HJ branch migration allows RuvC to scan DNA until it finds its consensus sequence, where it cleaves and resolves the cruciform DNA. In Pseudomonas syringae pv. syringae (strain B728a), this protein is Holliday junction branch migration complex subunit RuvA.